The sequence spans 309 residues: Ribonuclease Z (309 aa).

Zn(2+)-binding residues include H63, H65, D67, H68, H143, D213, and H271. The Proton acceptor role is filled by D67.

The protein belongs to the RNase Z family. Homodimer. It depends on Zn(2+) as a cofactor.

It catalyses the reaction Endonucleolytic cleavage of RNA, removing extra 3' nucleotides from tRNA precursor, generating 3' termini of tRNAs. A 3'-hydroxy group is left at the tRNA terminus and a 5'-phosphoryl group is left at the trailer molecule.. Zinc phosphodiesterase, which displays some tRNA 3'-processing endonuclease activity. Probably involved in tRNA maturation, by removing a 3'-trailer from precursor tRNA. This chain is Ribonuclease Z, found in Phocaeicola vulgatus (strain ATCC 8482 / DSM 1447 / JCM 5826 / CCUG 4940 / NBRC 14291 / NCTC 11154) (Bacteroides vulgatus).